The sequence spans 382 residues: Sphingoid long-chain base transporter RSB1 (382 aa).

Over 1 to 34 (MSNATNNTLGSLLPQLEAAANSNSLYGGMVPNLR) the chain is Extracellular. N-linked (GlcNAc...) asparagine glycans are attached at residues Asn3 and Asn6. The helical transmembrane segment at 35-55 (FNITMIVIWGILLTIHVVQLL) threads the bilayer. The Cytoplasmic segment spans residues 56–57 (MR). Residues 58–78 (QYWFSIAFICTGILEVLGFIG) form a helical membrane-spanning segment. Residues 79–90 (RTWSHSNVADMD) are Extracellular-facing. A helical transmembrane segment spans residues 91–111 (AFLLNMICLTIAPVFTMGGIY). At 112–135 (YQLAKLIEVYGHRFSLLPSPMAYS) the chain is on the cytoplasmic side. Residues 136-156 (FIFICSDIVSLVVQAVGGGLC) form a helical membrane-spanning segment. Residues 157-171 (GVAVTDGTSTTTGNH) are Extracellular-facing. A helical transmembrane segment spans residues 172-192 (VFIAGLAIQVASMAIFLMLWF). Residues 193–241 (HFLFRIYISVRWEHINSRPISLSLLKISQTEVDYLYREKFHFLRLEPKR) lie on the Cytoplasmic side of the membrane. A helical transmembrane segment spans residues 242-262 (WVFHYFNLAITVAVLTIFTRC). The Extracellular segment spans residues 263-281 (CYRLAELVVGWDGYLITHE). A helical transmembrane segment spans residues 282–302 (WYFIILDALMMAIATVTLTIF). Over 303–382 (HPGFAFKGRS…LFSSKKKAKL (80 aa)) the chain is Cytoplasmic.

Belongs to the lipid-translocating exporter (LTE) (TC 9.A.26.1) family.

The protein localises to the cell membrane. Functionally, catalyzes the ATP-dependent translocation of sphingoid long-chain bases (LCBs) from the cytoplasmic site toward the extracytoplasmic side of the membrane (flip-flop). Involved in the establishment of the functional lipid asymmetry of the plasma membrane. Regulates intracellular levels of LCBs, sphingolipid precursors that are growth inhibitory at increased levels. The chain is Sphingoid long-chain base transporter RSB1 (RSB1) from Saccharomyces cerevisiae (strain ATCC 204508 / S288c) (Baker's yeast).